The chain runs to 65 residues: Conotoxin Cal1.5 (65 aa).

An N-terminal signal peptide occupies residues 1 to 18; the sequence is MRCLPVFIILLLLASTAA. A propeptide spanning residues 19 to 49 is cleaved from the precursor; that stretch reads VDVAGSKLKRRLERKPYQGSQAYVKKTAFGL. 2 disulfides stabilise this stretch: Cys52–Cys62 and Cys53–Cys59. 4-hydroxyproline is present on Pro61.

This sequence belongs to the conotoxin T superfamily. Expressed by the venom duct.

The protein localises to the secreted. In terms of biological role, probable neurotoxin with unknown target. Possibly targets ion channels. The sequence is that of Conotoxin Cal1.5 from Californiconus californicus (California cone).